Here is a 242-residue protein sequence, read N- to C-terminus: DNA repair protein RecO (242 aa).

The protein belongs to the RecO family.

Functionally, involved in DNA repair and RecF pathway recombination. The protein is DNA repair protein RecO of Bacteroides fragilis (strain ATCC 25285 / DSM 2151 / CCUG 4856 / JCM 11019 / LMG 10263 / NCTC 9343 / Onslow / VPI 2553 / EN-2).